The chain runs to 198 residues: Remorin (198 aa).

Over residues 1–11 (MAELEAKKVEI) the composition is skewed to basic and acidic residues. The disordered stretch occupies residues 1 to 24 (MAELEAKKVEIVDPAPPAPGPVEA). Residues 97–184 (EESEKSKAEN…LKAEELAAKY (88 aa)) are a coiled coil.

It belongs to the remorin family. In terms of processing, the N-terminus is blocked. Post-translationally, phosphorylated.

It localises to the cell membrane. Functionally, binds to both simple and complex galacturonides. May be involved in cell-to-cell signaling and molecular transport. This is Remorin from Solanum tuberosum (Potato).